Consider the following 658-residue polypeptide: Glycogen debranching enzyme (658 aa).

Residue Asp335 is the Nucleophile of the active site. Glu370 serves as the catalytic Proton donor. Positions 457 to 468 are enriched in basic and acidic residues; that stretch reads NDANGEGNRDGT. The interval 457–478 is disordered; the sequence is NDANGEGNRDGTDSNFSNNHGT.

Belongs to the glycosyl hydrolase 13 family.

It carries out the reaction Hydrolysis of (1-&gt;6)-alpha-D-glucosidic linkages to branches with degrees of polymerization of three or four glucose residues in limit dextrin.. The protein operates within glycan degradation; glycogen degradation. In terms of biological role, removes maltotriose and maltotetraose chains that are attached by 1,6-alpha-linkage to the limit dextrin main chain, generating a debranched limit dextrin. This is Glycogen debranching enzyme from Pectobacterium carotovorum subsp. carotovorum (strain PC1).